The chain runs to 66 residues: MAAHNLCFNSAFVCNVHHQKTQHFPCNAVSKTTSTHAVTFHRRSANYRPPLWDHQYLLSLENIYMW.

Residues 1–25 (MAAHNLCFNSAFVCNVHHQKTQHFP) constitute a chloroplast transit peptide.

The protein belongs to the terpene synthase family. Tpsb subfamily. Expressed exclusively in flowers.

Its subcellular location is the plastid. It is found in the chloroplast. In Arabidopsis thaliana (Mouse-ear cress), this protein is Putative inactive (E)-beta-ocimene synthase, chloroplastic (TPS02).